The following is a 364-amino-acid chain: Long-wave-sensitive opsin 1 (364 aa).

Topologically, residues 1-58 are extracellular; the sequence is MTQRWGPQRLAGGQPQAGLEESTQASIFTYTNSNATRDPFEGPNYHIAPRWVYHLTSA. Ser22 carries O-linked (GlcNAc) serine glycosylation. The N-linked (GlcNAc...) asparagine glycan is linked to Asn34. A helical membrane pass occupies residues 59-79; the sequence is WMIFVVIASVFTNGLVLVATM. At 80 to 90 the chain is on the cytoplasmic side; the sequence is RFKKLRHPLNW. A helical membrane pass occupies residues 91 to 111; that stretch reads ILVNLAIADLAETIIASTISV. At 112–126 the chain is on the extracellular side; the sequence is VNQIYGYFVLGHPLC. Cys126 and Cys203 form a disulfide bridge. Residues 127-147 form a helical membrane-spanning segment; it reads VVEGYTVSLCGITGLWSLAII. Over 148–168 the chain is Cytoplasmic; it reads SWERWLVVCKPFGNVRFDAKL. Residues 169–189 form a helical membrane-spanning segment; the sequence is AIAGIAFSWIWAAVWTAPPIF. Over 190-219 the chain is Extracellular; the sequence is GWSRYWPHGLKTSCGPDVFSGSSYPGVQSY. The chain crosses the membrane as a helical span at residues 220-240; the sequence is MIVLMTTCCIIPLSVIILCYL. The Cytoplasmic portion of the chain corresponds to 241–269; sequence QVWLAIRAVAKQQKESESTQKAEKEVTRM. The chain crosses the membrane as a helical span at residues 270–290; sequence VVVMVLAYCLCWGPYTFFACF. Over 291–301 the chain is Extracellular; sequence AAAHPGYAFHP. The helical transmembrane segment at 302–324 threads the bilayer; that stretch reads LVAALPAYFAKSATIYNPIIYVF. N6-(retinylidene)lysine is present on Lys312. The Cytoplasmic segment spans residues 325 to 364; sequence MNRQFRNCILQLFGKKVDDSSELSSASRTEASSVSSVSPA.

Belongs to the G-protein coupled receptor 1 family. Opsin subfamily. Phosphorylated on some or all of the serine and threonine residues present in the C-terminal region. As to expression, the three color pigments are found in the cone photoreceptor cells.

The protein resides in the membrane. Visual pigments are the light-absorbing molecules that mediate vision. They consist of an apoprotein, opsin, covalently linked to cis-retinal. In Canis lupus familiaris (Dog), this protein is Long-wave-sensitive opsin 1 (OPN1LW).